The primary structure comprises 508 residues: Histidine ammonia-lyase (508 aa).

Residues 139 to 141 constitute a cross-link (5-imidazolinone (Ala-Gly)); sequence ASG. Position 140 is a 2,3-didehydroalanine (Ser) (serine 140).

This sequence belongs to the PAL/histidase family. In terms of processing, contains an active site 4-methylidene-imidazol-5-one (MIO), which is formed autocatalytically by cyclization and dehydration of residues Ala-Ser-Gly.

It is found in the cytoplasm. It catalyses the reaction L-histidine = trans-urocanate + NH4(+). The protein operates within amino-acid degradation; L-histidine degradation into L-glutamate; N-formimidoyl-L-glutamate from L-histidine: step 1/3. The chain is Histidine ammonia-lyase from Acidiphilium cryptum (strain JF-5).